The following is a 385-amino-acid chain: Cytochrome b (385 aa).

At 1 to 27 (MRLLKSHPLLKLVNSYLIDASQPSNIS) the chain is on the mitochondrial matrix side. A ubiquinone is bound at residue tyrosine 16. The helical transmembrane segment at 28–51 (YLWNFGSLLACCLIIQIVTGVTLA) threads the bilayer. At 52 to 74 (MHYSPNVLEAFNSIEHIMRDVNN) the chain is on the mitochondrial intermembrane side. Residues 75-102 (GWLVRYLHSNTASAFFFLVYLHIGRGMY) traverse the membrane as a helical segment. Residues histidine 82 and histidine 96 each coordinate heme b. Residues 103 to 110 (YGSYRAPR) are Mitochondrial matrix-facing. A helical membrane pass occupies residues 111 to 135 (TLVWAIGTVILILMMATAFLGYVLP). Residues 136–172 (YGQMSLWGATVITNLISAIPWIGQDIVEFIWGGFSVN) lie on the Mitochondrial intermembrane side of the membrane. The chain crosses the membrane as a helical span at residues 173–205 (NATLNRFFALHFVLPFILAALVLMHLIALHDTA). Heme b contacts are provided by histidine 183 and histidine 197. Histidine 202 serves as a coordination point for a ubiquinone. Over 206-224 (GSSNPLGVSGNYDRITFAP) the chain is Mitochondrial matrix. A helical transmembrane segment spans residues 225–247 (YYLFKDLITIFIFIYVLSSFVFF). The Mitochondrial intermembrane portion of the chain corresponds to 248 to 288 (MPNVLGDSENYIMANPMQTPPAIVPEWYLLPFYAILRSIPN). The chain crosses the membrane as a helical span at residues 289 to 309 (KLLGVIAMFSAILAIMLLPIT). At 310–320 (DLGRSKGLQFR) the chain is on the mitochondrial matrix side. Residues 321–341 (PLSKFAFWAFVVNFLILMKLG) traverse the membrane as a helical segment. At 342-348 (ACHVESP) the chain is on the mitochondrial intermembrane side. A helical membrane pass occupies residues 349-365 (FIELGQFSTIFYFSYFI). Residues 366–385 (FIVPVLSLIENTLVDLNYLK) are Mitochondrial matrix-facing.

The protein belongs to the cytochrome b family. Component of the ubiquinol-cytochrome c oxidoreductase (cytochrome b-c1 complex, complex III, CIII), a multisubunit enzyme composed of 10 subunits. The complex is composed of 3 respiratory subunits cytochrome b (cob), cytochrome c1 (cyt-1) and Rieske protein (fes-1), 2 core protein subunits pep and ucr-1, and 5 low-molecular weight protein subunits qcr6, qcr7, qcr8, qcr9 and probably NCU16844/qcr10. The complex exists as an obligatory dimer and forms supercomplexes (SCs) in the inner mitochondrial membrane with NADH-ubiquinone oxidoreductase (complex I, CI) and cytochrome c oxidase (complex IV, CIV), resulting in different assemblies (supercomplexes SCI(1)III(2), SCIII(2)IV(1) and SCIII(2)IV(2) as well as higher order I(x)III(y)IV(z) megacomplexes). Heme b serves as cofactor.

It localises to the mitochondrion inner membrane. The catalysed reaction is a quinol + 2 Fe(III)-[cytochrome c](out) = a quinone + 2 Fe(II)-[cytochrome c](out) + 2 H(+)(out). Component of the ubiquinol-cytochrome c oxidoreductase, a multisubunit transmembrane complex that is part of the mitochondrial electron transport chain which drives oxidative phosphorylation. The respiratory chain contains 3 multisubunit complexes succinate dehydrogenase (complex II, CII), ubiquinol-cytochrome c oxidoreductase (cytochrome b-c1 complex, complex III, CIII) and cytochrome c oxidase (complex IV, CIV), that cooperate to transfer electrons derived from NADH and succinate to molecular oxygen, creating an electrochemical gradient over the inner membrane that drives transmembrane transport and the ATP synthase. The cytochrome b-c1 complex catalyzes electron transfer from ubiquinol to cytochrome c, linking this redox reaction to translocation of protons across the mitochondrial inner membrane, with protons being carried across the membrane as hydrogens on the quinol. In the process called Q cycle, 2 protons are consumed from the matrix, 4 protons are released into the intermembrane space and 2 electrons are passed to cytochrome c. Cytochrome b is a catalytic core subunit containing 2 b-type hemes BL and BH topographically segregated in the quinone reduction (Qi) and quinol oxidation (Q0) sites on opposite sides of the membrane. This chain is Cytochrome b (cob), found in Neurospora crassa (strain ATCC 24698 / 74-OR23-1A / CBS 708.71 / DSM 1257 / FGSC 987).